The following is a 196-amino-acid chain: Chaperone protein TorD (196 aa).

The protein belongs to the TorD/DmsD family. TorD subfamily.

It is found in the cytoplasm. In terms of biological role, involved in the biogenesis of TorA. Acts on TorA before the insertion of the molybdenum cofactor and, as a result, probably favors a conformation of the apoenzyme that is competent for acquiring the cofactor. In Pasteurella multocida (strain Pm70), this protein is Chaperone protein TorD.